We begin with the raw amino-acid sequence, 657 residues long: Endoplasmic reticulum chaperone BiP homolog (657 aa).

The N-terminal stretch at 1-17 is a signal peptide; sequence MKVFSLILIAFVANAYC. ATP is bound by residues 38–41, Lys-99, 229–231, 295–302, and 366–369; these read GTTY, GGT, EKAKRALS, and GSTR. Positions 128-282 are nucleotide-binding (NBD); it reads KPNVEVKVGS…KKKSGKDLRK (155 aa). Residues 402 to 502 form a substrate-binding (SBD) region; the sequence is VQAGVIGGVE…PRGVPQIEVT (101 aa). Positions 607–657 are disordered; sequence LGSNQDASTEENKEQKKELESVVQPIVSKLYSAGGQGEQASEEPSEDHDEL. Residues 616-626 are compositionally biased toward basic and acidic residues; the sequence is EENKEQKKELE. Residues 646–657 show a composition bias toward acidic residues; that stretch reads ASEEPSEDHDEL. The Prevents secretion from ER signature appears at 654–657; that stretch reads HDEL.

It belongs to the heat shock protein 70 family.

The protein resides in the endoplasmic reticulum lumen. The catalysed reaction is ATP + H2O = ADP + phosphate + H(+). The chaperone activity is regulated by ATP-induced allosteric coupling of the nucleotide-binding (NBD) and substrate-binding (SBD) domains. In the ADP-bound and nucleotide-free (apo) states, the two domains have little interaction. In contrast, in the ATP-bound state the two domains are tightly coupled, which results in drastically accelerated kinetics in both binding and release of polypeptide substrates. J domain-containing co-chaperones stimulate the ATPase activity and are required for efficient substrate recognition. In terms of biological role, endoplasmic reticulum chaperone that plays a key role in protein folding and quality control in the endoplasmic reticulum lumen. Required for ER dynamics during the first embryonic cell divisions. Specifically, controls ER transition into sheet-like structures at the onset of mitosis, possibly by regulating homotypic membrane fusion. This chain is Endoplasmic reticulum chaperone BiP homolog (hsp-4), found in Caenorhabditis elegans.